A 204-amino-acid chain; its full sequence is MQLEISPRQRSQQQKEEEGEHQQRAGEEAVGAVFSIEPWVDAAAVLVPPLNFAEVNDGIFRSGFPAADNFAFLLSLKLRSIVYLCPEPYPEENTRFLEQNGIKLHQFGIDGSKELLVNIPEEKIREALKVILDVRNQPVLIHCKRGKHRTGCVVGCLRKLQKWCLTSVFDEYQHFAAAKARSTDQRFMELFDTSSLMHLTASQC.

A disordered region spans residues 1–27 (MQLEISPRQRSQQQKEEEGEHQQRAGE). The span at 13–27 (QQKEEEGEHQQRAGE) shows a compositional bias: basic and acidic residues. In terms of domain architecture, Tyrosine-protein phosphatase spans 51–203 (NFAEVNDGIF…SSLMHLTASQ (153 aa)). Positions 107–119 (FGIDGSKELLVNI) are WPD loop important for active site topology. Residues Asn-118, Ile-119, and Lys-123 each coordinate 1D-myo-inositol hexakisphosphate. Cys-143 acts as the Phosphocysteine intermediate in catalysis.

The protein belongs to the protein-tyrosine phosphatase family. Atypical dual-specificity phosphatase Siw14-like subfamily. As to expression, expressed in roots and young panicles.

Its subcellular location is the cytoplasm. It localises to the nucleus. The enzyme catalyses 5-diphospho-1D-myo-inositol 1,2,3,4,6-pentakisphosphate + H2O = 1D-myo-inositol hexakisphosphate + phosphate + H(+). It catalyses the reaction 1,5-bis(diphospho)-1D-myo-inositol 2,3,4,6-tetrakisphosphate + H2O = 1-diphospho-1D-myo-inositol 2,3,4,5,6-pentakisphosphate + phosphate + 2 H(+). The catalysed reaction is 3,5-bis(diphospho)-1D-myo-inositol 1,2,4,6-tetrakisphosphate + H2O = 3-diphospho-1D-myo-inositol 1,2,4,5,6-pentakisphosphate + phosphate + 2 H(+). It carries out the reaction 6-diphospho-1D-myo-inositol pentakisphosphate + H2O = 1D-myo-inositol hexakisphosphate + phosphate + H(+). Functionally, cleaves the beta-phosphate at the 5-position of soluble inositol pyrophosphates. Has highest activity on 5-diphosphoinositol 1,2,3,4,6-pentakisphosphate (5-InsP(7)). Acts as a negative regulator of defense responses against the fungal pathogen Magnaporthe oryzae. In Oryza sativa subsp. japonica (Rice), this protein is Inositol diphosphatase DSP2.